The sequence spans 201 residues: MPVTHASFPCSVLLLCGGRGQRMGGRDKGLLEWRGRPLIAWLHEQVRPLSDDLILSCNRNHERYAHYADQLVTDEDQDFQGPLAGIRAGMAVAHHEQMLVLPCDAPLVDRQLLEALLAHAGARPVVVRQGDYWQPLFCLLPTALKADLEQLWQAGERSPQRWFSRLAPVAVECPIDDPRLANLNTPEMLAAASLSADARES.

Residues 15–17, Lys-28, Asp-74, and Asp-104 contribute to the GTP site; that span reads LCG. Mg(2+) is bound at residue Asp-104.

It belongs to the MobA family. Monomer. The cofactor is Mg(2+).

The protein localises to the cytoplasm. The catalysed reaction is Mo-molybdopterin + GTP + H(+) = Mo-molybdopterin guanine dinucleotide + diphosphate. Functionally, transfers a GMP moiety from GTP to Mo-molybdopterin (Mo-MPT) cofactor (Moco or molybdenum cofactor) to form Mo-molybdopterin guanine dinucleotide (Mo-MGD) cofactor. This Ectopseudomonas mendocina (strain ymp) (Pseudomonas mendocina) protein is Molybdenum cofactor guanylyltransferase.